Here is a 178-residue protein sequence, read N- to C-terminus: 2-C-methyl-D-erythritol 2,4-cyclodiphosphate synthase (178 aa).

A divalent metal cation contacts are provided by Asp-24, His-26, and His-61. A 4-CDP-2-C-methyl-D-erythritol 2-phosphate-binding site is contributed by 24-26; it reads DSH. 150-153 lines the 4-CDP-2-C-methyl-D-erythritol 2-phosphate pocket; the sequence is TSGE.

The protein belongs to the IspF family. In terms of assembly, homotrimer. It depends on a divalent metal cation as a cofactor.

The enzyme catalyses 4-CDP-2-C-methyl-D-erythritol 2-phosphate = 2-C-methyl-D-erythritol 2,4-cyclic diphosphate + CMP. It functions in the pathway isoprenoid biosynthesis; isopentenyl diphosphate biosynthesis via DXP pathway; isopentenyl diphosphate from 1-deoxy-D-xylulose 5-phosphate: step 4/6. Its function is as follows. Involved in the biosynthesis of isopentenyl diphosphate (IPP) and dimethylallyl diphosphate (DMAPP), two major building blocks of isoprenoid compounds. Catalyzes the conversion of 4-diphosphocytidyl-2-C-methyl-D-erythritol 2-phosphate (CDP-ME2P) to 2-C-methyl-D-erythritol 2,4-cyclodiphosphate (ME-CPP) with a corresponding release of cytidine 5-monophosphate (CMP). This is 2-C-methyl-D-erythritol 2,4-cyclodiphosphate synthase from Chlamydia trachomatis serovar L2b (strain UCH-1/proctitis).